Here is a 515-residue protein sequence, read N- to C-terminus: Maturase K (515 aa).

This sequence belongs to the intron maturase 2 family. MatK subfamily.

It localises to the plastid. Its subcellular location is the chloroplast. Usually encoded in the trnK tRNA gene intron. Probably assists in splicing its own and other chloroplast group II introns. This Picea pungens (Colorado spruce) protein is Maturase K.